Consider the following 478-residue polypeptide: Catalase (478 aa).

The disordered stretch occupies residues 1-23 (MTNQLTTNEGQPWADNQHSQTAG). Catalysis depends on residues His53 and Asn126. Residue Tyr336 participates in heme binding.

It belongs to the catalase family. Requires heme as cofactor.

It localises to the cytoplasm. The enzyme catalyses 2 H2O2 = O2 + 2 H2O. Its function is as follows. Decomposes hydrogen peroxide into water and oxygen; serves to protect cells from the toxic effects of hydrogen peroxide. The protein is Catalase (katA) of Latilactobacillus sakei (Lactobacillus sakei).